The following is a 575-amino-acid chain: Lysine--tRNA ligase (575 aa).

Residues E412 and E419 each coordinate Mg(2+).

It belongs to the class-II aminoacyl-tRNA synthetase family. In terms of assembly, homodimer. The cofactor is Mg(2+).

The protein localises to the cytoplasm. It catalyses the reaction tRNA(Lys) + L-lysine + ATP = L-lysyl-tRNA(Lys) + AMP + diphosphate. The chain is Lysine--tRNA ligase from Bacteroides fragilis (strain ATCC 25285 / DSM 2151 / CCUG 4856 / JCM 11019 / LMG 10263 / NCTC 9343 / Onslow / VPI 2553 / EN-2).